A 443-amino-acid polypeptide reads, in one-letter code: Putative F-box/FBD/LRR-repeat protein At5g22670 (443 aa).

An F-box domain is found at 10–56 (QDSISLLPDDLLCRILSNLPTKVAVRTSVLSKRWKRFSLSVPLLEFN). LRR repeat units follow at residues 139 to 165 (SLRL…HLID), 166 to 191 (NIYP…NVSR), 219 to 243 (YGDI…SLRD), 275 to 300 (NFLL…TMSG), and 325 to 353 (YAVF…VLEL). An FBD domain is found at 361 to 412 (LLILSSSIPKCLRSSLEHVEIHTPISGAEAEMKLVKYFLENSAVLKKFTLQL).

The polypeptide is Putative F-box/FBD/LRR-repeat protein At5g22670 (Arabidopsis thaliana (Mouse-ear cress)).